The chain runs to 113 residues: UPF0482 protein KPK_2871 (113 aa).

Residues 1-28 (MNMTLNKRWCLTAILALSAVVYTSSSFA) form the signal peptide. A disordered region spans residues 38–61 (GDSAQSRQQASMEKEQWNDTRSLR). A compositionally biased stretch (polar residues) spans 39-48 (DSAQSRQQAS). Positions 49–59 (MEKEQWNDTRS) are enriched in basic and acidic residues.

The protein belongs to the UPF0482 family.

This is UPF0482 protein KPK_2871 from Klebsiella pneumoniae (strain 342).